The primary structure comprises 1378 residues: DNA-directed RNA polymerase subunit beta' (1378 aa).

Positions 69, 71, 84, and 87 each coordinate Zn(2+). Mg(2+) contacts are provided by Asp460, Asp462, and Asp464. Zn(2+)-binding residues include Cys808, Cys882, Cys889, and Cys892.

It belongs to the RNA polymerase beta' chain family. In terms of assembly, the RNAP catalytic core consists of 2 alpha, 1 beta, 1 beta' and 1 omega subunit. When a sigma factor is associated with the core the holoenzyme is formed, which can initiate transcription. Requires Mg(2+) as cofactor. It depends on Zn(2+) as a cofactor.

It carries out the reaction RNA(n) + a ribonucleoside 5'-triphosphate = RNA(n+1) + diphosphate. DNA-dependent RNA polymerase catalyzes the transcription of DNA into RNA using the four ribonucleoside triphosphates as substrates. In Rickettsia canadensis (strain McKiel), this protein is DNA-directed RNA polymerase subunit beta'.